The following is a 241-amino-acid chain: Core protein D3 homolog (241 aa).

It belongs to the chordopoxvirinae D3 family.

The protein localises to the virion. Its function is as follows. Late protein which is part of a large complex required for early virion morphogenesis. This complex participates in the formation of virosomes and the incorporation of virosomal contents into nascent immature virions. This chain is Core protein D3 homolog, found in Oryctolagus cuniculus (Rabbit).